A 70-amino-acid polypeptide reads, in one-letter code: Conotoxin elongated-tx3a-a (70 aa).

A signal peptide spans 1 to 24 (MLKMGVVLFIFLVLFPLATLQLDA). Residues 25 to 44 (DQPVERYAENKQLLSPDERR) constitute a propeptide that is removed on maturation. 3 disulfide bridges follow: Cys-55-Cys-68, Cys-56-Cys-66, and Cys-61-Cys-69. Trp-58 carries the 6'-bromotryptophan; partial modification. At Cys-69 the chain carries Cysteine amide; partial.

It belongs to the conotoxin M superfamily. In terms of processing, two short peptides are produced from this precursor; Conotoxin tx3a-b is amidated at Cys-69 (but has no bromotryptophan), whereas conotoxin tx3a-a has an unmodified Gly-70 and a bromotryptophan. Two elongated peptides are also produced; Conotoxin elongated-tx3a-b is amidated at Cys-69 (but has no bromotryptophan), whereas conotoxin elongated tx3a-a has an unmodified Gly-70 (but has no bromotryptophan). Ju et al. (2022) describe a disulfide connectivity (C55-C61; C56-C69; C66-C68) that differs from that of Han and colleagues (2006), McDougal et al. (2008), and Ueberheide et al. (2009). As to expression, expressed by the venom duct. Is present in all duct parts with a highest content in part 2 (proximal of the venom bulb) and then decreases in concentration toward the end of the duct.

The protein localises to the secreted. Functionally, intracranial injection into mice causes scratching and hyperactivity. In vitro, inhibits proliferation of the mice ovarian cancer cells ID8. In Conus textile (Cloth-of-gold cone), this protein is Conotoxin elongated-tx3a-a.